We begin with the raw amino-acid sequence, 111 residues long: UPF0145 protein RBAM_010660 (111 aa).

It belongs to the UPF0145 family.

The sequence is that of UPF0145 protein RBAM_010660 from Bacillus velezensis (strain DSM 23117 / BGSC 10A6 / LMG 26770 / FZB42) (Bacillus amyloliquefaciens subsp. plantarum).